A 447-amino-acid chain; its full sequence is Cysteine--tRNA ligase (447 aa).

Residue C28 coordinates Zn(2+). Residues 30 to 40 (PTVYNYIHIGN) carry the 'HIGH' region motif. Positions 211, 236, and 240 each coordinate Zn(2+). Residues 268–272 (KMSKS) carry the 'KMSKS' region motif. ATP is bound at residue K271.

This sequence belongs to the class-I aminoacyl-tRNA synthetase family. Monomer. It depends on Zn(2+) as a cofactor.

The protein localises to the cytoplasm. It catalyses the reaction tRNA(Cys) + L-cysteine + ATP = L-cysteinyl-tRNA(Cys) + AMP + diphosphate. In Streptococcus thermophilus (strain CNRZ 1066), this protein is Cysteine--tRNA ligase.